A 235-amino-acid polypeptide reads, in one-letter code: Orotidine 5'-phosphate decarboxylase (235 aa).

Substrate contacts are provided by residues Asp-16, Lys-38, 65–74 (DLKLHDIGNT), Thr-120, Arg-181, Gln-190, Gly-210, and Arg-211. Lys-67 serves as the catalytic Proton donor.

This sequence belongs to the OMP decarboxylase family. Type 1 subfamily. Homodimer.

It catalyses the reaction orotidine 5'-phosphate + H(+) = UMP + CO2. It functions in the pathway pyrimidine metabolism; UMP biosynthesis via de novo pathway; UMP from orotate: step 2/2. In terms of biological role, catalyzes the decarboxylation of orotidine 5'-monophosphate (OMP) to uridine 5'-monophosphate (UMP). The chain is Orotidine 5'-phosphate decarboxylase from Rhodopseudomonas palustris (strain BisA53).